The primary structure comprises 718 residues: Kinesin-like protein KIF2C (718 aa).

Residues 1 to 248 are globular; that stretch reads MESLPARLFP…CHPLTLTDPT (248 aa). 2 positions are modified to phosphoserine: Ser-3 and Ser-19. A disordered region spans residues 86–111; the sequence is PKQKRRSVNSKIPAPKEGLRSRSTRM. Ser-92 bears the Phosphoserine; by AURKB mark. A Microtubule tip localization signal motif is present at residues 95–98; that stretch reads SKIP. Phosphoserine is present on residues Ser-106, Ser-108, Ser-112, Ser-163, and Ser-186. The segment at 201 to 232 is negative regulator of microtubule-binding; it reads EKRAQNSEIRIKRAQEYDSSFPNWEFARMIKE. The Kinesin motor domain maps to 252 to 582; that stretch reads RICVCVRKRP…LRYADRVKEL (331 aa). Residues Arg-258 and 342–349 contribute to the ATP site; that span reads GQTGSGKT. The Nuclear localization signal motif lies at 409–412; sequence KKAK. Phosphoserine occurs at positions 513 and 626. Coiled-coil stretches lie at residues 613-651 and 689-716; these read NFKE…IIQQ and ALRE…SKKR.

The protein belongs to the TRAFAC class myosin-kinesin ATPase superfamily. Kinesin family. MCAK/KIF2 subfamily. In terms of assembly, interacts with CENPH. Interacts with MTUS2/TIP150; the interaction is direct. Interacts with MAPRE1; the interaction is direct, regulated by phosphorylation and is probably required for targeting to growing microtubule plus ends. Interacts with KIF18B at microtubule tips; this interaction increases the affinity of both partners for microtubule plus ends and is required for robust microtubule depolymerization. Phosphorylation by AURKA or AURKB strongly reduces KIF18B-binding. Post-translationally, phosphorylation by AURKB, regulates association with centromeres and kinetochores and the microtubule depolymerization activity. Ubiquitinated.

It localises to the cytoplasm. Its subcellular location is the cytoskeleton. It is found in the nucleus. The protein resides in the chromosome. The protein localises to the centromere. It localises to the kinetochore. In terms of biological role, in complex with KIF18B, constitutes the major microtubule plus-end depolymerizing activity in mitotic cells. Regulates the turnover of microtubules at the kinetochore and functions in chromosome segregation during mitosis. Plays a role in chromosome congression and is required for the lateral to end-on conversion of the chromosome-microtubule attachment. This chain is Kinesin-like protein KIF2C (KIF2C), found in Cricetulus griseus (Chinese hamster).